Consider the following 565-residue polypeptide: MADQYVEVLGDLIGLLKDYKPGTITIENITKLCQSMGLESFIDELDNDISRLSTASKIIVIDIDYNKTQSTVQDVKLVLASNFDNFDYSNEQLEEAGDKQSNILLNSLTNYDSLKQFHHNLEFLYLLDTYSSVESDNQISSGNNLGSGNGTNGSSLTNKTDKKSVSSGNGLDSKLNEGKLNLFKYFRELKKYINTFFKESCDNRFKVVANVDNRFGLYIYETHGYSMRSRPLAKVYFERAKVPQQRFYEYIYSSETGSWINENSENYSVGVNLILEVNFDDTDEDVFWFPKEFVPTDLFIDEKDQLTSRKVSDVLCHAFYELGSSKKQTIELMNDFTTDLIQIRRFNINNDNLDLIADILNWTIWYRTVLRPIYLKLVSSISDDDDQHIRADIANTKDEFTVENTNPEIMKGPTNKNASFMQRNSMSLQRRRRSSNKAKRPSMSEAVVFKDEGLQQFSLHEIMADTTTEPDQKPDNLNISNNSESFIGQQELMEGSNIINDDKMDIDEEAINDDDSDSQSGEEGNIPVLLVNEDHVSFKGLGSCSFYDDKDKWAKFVEDLFNVFS.

The disordered stretch occupies residues 141–170 (SGNNLGSGNGTNGSSLTNKTDKKSVSSGNG).

This sequence belongs to the Mediator complex subunit 1 family. As to quaternary structure, component of the Mediator complex.

It is found in the nucleus. In terms of biological role, component of the Mediator complex, a coactivator involved in the regulated transcription of nearly all RNA polymerase II-dependent genes. Mediator functions as a bridge to convey information from gene-specific regulatory proteins to the basal RNA polymerase II transcription machinery. Mediator is recruited to promoters by direct interactions with regulatory proteins and serves as a scaffold for the assembly of a functional preinitiation complex with RNA polymerase II and the general transcription factors. This chain is Mediator of RNA polymerase II transcription subunit 1 (MED1), found in Candida glabrata (strain ATCC 2001 / BCRC 20586 / JCM 3761 / NBRC 0622 / NRRL Y-65 / CBS 138) (Yeast).